The following is a 143-amino-acid chain: Phosphoprotein 32 (143 aa).

A compositionally biased stretch (polar residues) spans 1-14 (MESSNINALQQPSS). Positions 1–32 (MESSNINALQQPSSIAHHPSKQCASSLNETVK) are disordered.

The protein belongs to the varicellovirus ORF32 protein family. Post-translationally, phosphorylated by ORF47 protein.

The sequence is that of Phosphoprotein 32 from Homo sapiens (Human).